Reading from the N-terminus, the 39-residue chain is RapF inhibitor (39 aa).

A propeptide spanning residues 1 to 34 is cleaved from the precursor; that stretch reads MKLKSKLLLSCLALSTVFVATTIANAPTHQIEVA.

It belongs to the Phr family. As to quaternary structure, interacts with RapF and inhibits its interaction with ComA. In terms of processing, contains a predicted signal peptide cleavage site in the N-terminal region, however the propeptide is probably subject to only one processing event, at the N-terminal end of the mature peptide.

It is found in the secreted. The protein localises to the cytoplasm. In terms of biological role, signaling molecule involved in the regulation of genetic competence development. Secreted during production, but the mature peptide acts intracellularly, indicating that it needs to be imported into the cell to function. Stimulates expression of the genes controlled by ComA, a transcriptional factor that regulates the development of genetic competence. Acts by inhibiting RapF, which regulates the activity of ComA. The sequence is that of RapF inhibitor (phrF) from Bacillus subtilis (strain 168).